The following is a 1061-amino-acid chain: Chimeric ERCC6-PGBD3 protein (1061 aa).

The tract at residues 1–39 (MPNEGIPHSSQTQEQDCLQSQPVSNNEEMAIKQESGGDG) is disordered. Residues 8 to 27 (HSSQTQEQDCLQSQPVSNNE) show a composition bias toward polar residues. S158 carries the phosphoserine modification. A Glycyl lysine isopeptide (Lys-Gly) (interchain with G-Cter in SUMO2) cross-link involves residue K255. 4 disordered regions span residues 287–323 (KQGCNKRAARKAPAPVTPPAPVQNKNKPNKKARVLSK), 344–466 (GKVG…QRLS), 494–521 (VIQPPENATAPVSDEESGDEEGGTINNL), and 537–573 (SDAESDSDDPSYAPKDDSPDEVPSTFTVQQPPPSRRR). Positions 353–363 (RPWESDMRPEA) are enriched in basic and acidic residues. Positions 364–392 (EGDSEGEESEYFPTEEEEEEEDDEVEGAE) are enriched in acidic residues. Phosphoserine is present on residues S429 and S430. Residues 451-462 (RYRDDGDEDYYK) show a composition bias toward basic and acidic residues. Acidic residues predominate over residues 506 to 515 (SDEESGDEEG). S554 carries the post-translational modification Phosphoserine.

In terms of tissue distribution, expressed in heart and oocytes, but not in granulosa cells (at protein level).

It localises to the nucleus. In terms of biological role, involved in repair of DNA damage following UV irradiation, acting either in the absence of ERCC6 or synergistically with ERCC6. Involved in the regulation of gene expression. In the absence of ERCC6, induces the expression of genes characteristic of interferon-like antiviral responses. This response is almost completely suppressed in the presence of ERCC6. In the presence of ERCC6, regulates the expression of genes involved in metabolism regulation, including IGFBP5 and IGFBP7. In vitro binds to PGBD3-related transposable elements, called MER85s; these non-autonomous 140 bp elements are characterized by the presence of PGBD3 terminal inverted repeats and the absence of internal transposase ORF. In Homo sapiens (Human), this protein is Chimeric ERCC6-PGBD3 protein.